We begin with the raw amino-acid sequence, 351 residues long: UDP-N-acetylglucosamine--N-acetylmuramyl-(pentapeptide) pyrophosphoryl-undecaprenol N-acetylglucosamine transferase (351 aa).

UDP-N-acetyl-alpha-D-glucosamine contacts are provided by residues 12–14 (TGG), asparagine 124, arginine 160, serine 188, isoleucine 239, 258–263 (ALTVCE), and glutamine 283.

The protein belongs to the glycosyltransferase 28 family. MurG subfamily.

Its subcellular location is the cell inner membrane. It carries out the reaction di-trans,octa-cis-undecaprenyl diphospho-N-acetyl-alpha-D-muramoyl-L-alanyl-D-glutamyl-meso-2,6-diaminopimeloyl-D-alanyl-D-alanine + UDP-N-acetyl-alpha-D-glucosamine = di-trans,octa-cis-undecaprenyl diphospho-[N-acetyl-alpha-D-glucosaminyl-(1-&gt;4)]-N-acetyl-alpha-D-muramoyl-L-alanyl-D-glutamyl-meso-2,6-diaminopimeloyl-D-alanyl-D-alanine + UDP + H(+). The protein operates within cell wall biogenesis; peptidoglycan biosynthesis. Functionally, cell wall formation. Catalyzes the transfer of a GlcNAc subunit on undecaprenyl-pyrophosphoryl-MurNAc-pentapeptide (lipid intermediate I) to form undecaprenyl-pyrophosphoryl-MurNAc-(pentapeptide)GlcNAc (lipid intermediate II). The chain is UDP-N-acetylglucosamine--N-acetylmuramyl-(pentapeptide) pyrophosphoryl-undecaprenol N-acetylglucosamine transferase from Glaesserella parasuis serovar 5 (strain SH0165) (Haemophilus parasuis).